The following is a 395-amino-acid chain: Argininosuccinate synthase (395 aa).

Residue 7–15 coordinates ATP; it reads LYSGGLDTS. Tyrosine 83 lines the L-citrulline pocket. Glycine 113 is an ATP binding site. The L-aspartate site is built by threonine 115, asparagine 119, and aspartate 120. Asparagine 119 contacts L-citrulline. L-citrulline is bound by residues arginine 123, serine 169, serine 178, glutamate 253, and tyrosine 265.

Belongs to the argininosuccinate synthase family. Type 1 subfamily. As to quaternary structure, homotetramer.

It is found in the cytoplasm. It carries out the reaction L-citrulline + L-aspartate + ATP = 2-(N(omega)-L-arginino)succinate + AMP + diphosphate + H(+). Its pathway is amino-acid biosynthesis; L-arginine biosynthesis; L-arginine from L-ornithine and carbamoyl phosphate: step 2/3. This chain is Argininosuccinate synthase, found in Picrophilus torridus (strain ATCC 700027 / DSM 9790 / JCM 10055 / NBRC 100828 / KAW 2/3).